The following is a 116-amino-acid chain: Nitrogenase iron-iron protein delta chain (116 aa).

Hexamer of two alpha, two beta, and two delta chains. It depends on iron-sulfur cluster as a cofactor.

It catalyses the reaction N2 + 8 reduced [2Fe-2S]-[ferredoxin] + 16 ATP + 16 H2O = H2 + 8 oxidized [2Fe-2S]-[ferredoxin] + 2 NH4(+) + 16 ADP + 16 phosphate + 6 H(+). Its function is as follows. The key enzymatic reactions in nitrogen fixation are catalyzed by the nitrogenase complex, which has 2 components: the iron protein (component 2) and a component 1 which is either a molybdenum-iron protein, a vanadium-iron, or an iron-iron protein. The protein is Nitrogenase iron-iron protein delta chain (anfG) of Rhodospirillum rubrum.